A 541-amino-acid polypeptide reads, in one-letter code: Chaperonin GroEL 2 (541 aa).

ATP contacts are provided by residues Thr29 to Pro32, Asp86 to Thr90, Gly413, Asn476 to Ala478, and Asp492.

The protein belongs to the chaperonin (HSP60) family. In terms of assembly, forms a cylinder of 14 subunits composed of two heptameric rings stacked back-to-back. Interacts with the co-chaperonin GroES.

The protein resides in the cytoplasm. The enzyme catalyses ATP + H2O + a folded polypeptide = ADP + phosphate + an unfolded polypeptide.. Functionally, together with its co-chaperonin GroES, plays an essential role in assisting protein folding. The GroEL-GroES system forms a nano-cage that allows encapsulation of the non-native substrate proteins and provides a physical environment optimized to promote and accelerate protein folding. The chain is Chaperonin GroEL 2 from Streptomyces avermitilis (strain ATCC 31267 / DSM 46492 / JCM 5070 / NBRC 14893 / NCIMB 12804 / NRRL 8165 / MA-4680).